Consider the following 43-residue polypeptide: Protein PsbN (43 aa).

Residues 7–27 (VAIFISGLLVSFTGYALYTAF) form a helical membrane-spanning segment.

This sequence belongs to the PsbN family.

It localises to the plastid. The protein localises to the chloroplast thylakoid membrane. Its function is as follows. May play a role in photosystem I and II biogenesis. The protein is Protein PsbN of Sagittaria latifolia (Broadleaf arrowhead).